The chain runs to 216 residues: Thymidylate kinase (216 aa).

9-16 (GIEGSGKT) contacts ATP.

It belongs to the thymidylate kinase family.

The catalysed reaction is dTMP + ATP = dTDP + ADP. In terms of biological role, phosphorylation of dTMP to form dTDP in both de novo and salvage pathways of dTTP synthesis. In Syntrophotalea carbinolica (strain DSM 2380 / NBRC 103641 / GraBd1) (Pelobacter carbinolicus), this protein is Thymidylate kinase.